The chain runs to 469 residues: Properdin (469 aa).

Positions 1 to 27 are cleaved as a signal peptide; sequence MITEGAQAPRLLLPPLLLLLTLPATGS. 7 consecutive TSP type-1 domains span residues 28 to 76, 77 to 134, 136 to 191, 193 to 255, 257 to 313, 315 to 377, and 379 to 462; these read DPVL…QPCR, SPRW…QCCP, MGGW…QVCP, HGAW…PPCP, AGGW…VPCP, DGEW…QHCP, and KGSW…PACK. Cystine bridges form between Cys-32–Cys-56, Cys-43–Cys-72, and Cys-57–Cys-75. C-linked (Man) tryptophan glycans are attached at residues Trp-83 and Trp-86. Disulfide bonds link Cys-89–Cys-127, Cys-93–Cys-133, Cys-104–Cys-111, Cys-132–Cys-170, Cys-148–Cys-184, Cys-152–Cys-190, and Cys-163–Cys-174. An O-linked (Fuc...) threonine glycan is attached at Thr-92. Trp-139, Trp-142, and Trp-145 each carry a C-linked (Man) tryptophan glycan. O-linked (Fuc...) threonine glycosylation is present at Thr-151. Trp-196, Trp-199, and Trp-202 each carry a C-linked (Man) tryptophan glycan. 3 disulfide bridges follow: Cys-205–Cys-248, Cys-209–Cys-254, and Cys-224–Cys-238. Residue Ser-208 is glycosylated (O-linked (Fuc...) serine). A disordered region spans residues 219–238; it reads TRSRKCSAPEPSQKPPGKPC. C-linked (Man) tryptophan glycosylation is found at Trp-260 and Trp-263. 3 disulfides stabilise this stretch: Cys-269-Cys-306, Cys-273-Cys-312, and Cys-284-Cys-296. Residue Thr-272 is glycosylated (O-linked (Fuc...) threonine). C-linked (Man) tryptophan glycans are attached at residues Trp-321 and Trp-324. Intrachain disulfides connect Cys-327–Cys-370, Cys-337–Cys-376, and Cys-350–Cys-360. Positions 351 to 359 are interaction with Complement C3 beta chain; the sequence is RGRKFDGHR. C-linked (Man) tryptophan glycosylation is found at Trp-382, Trp-385, and Trp-388. Disulfide bonds link Cys-391-Cys-455, Cys-395-Cys-461, and Cys-407-Cys-439. Asn-428 carries an N-linked (GlcNAc...) (complex) asparagine glycan.

In terms of assembly, in plasma, properdin exists as dimers, trimers or tetramers in the relative proportions of 26:54:20. Interacts with the pro-C3-convertase enzyme complex (C3b-Bb) comprised of Complement C3 beta chain (C3b) and the Complement factor B Bb fragment (Bb), where it binds (via its TSP type-1 5 domain) with C3b and Bb. This interaction stabilizes the complex and allows it to become the active C3-convertase enzyme complex (C3b-Bb-FP). Interacts with C3b. Interacts with CFB.

It is found in the secreted. Functionally, a positive regulator of the alternate pathway (AP) of complement. It binds to and stabilizes the C3- and C5-convertase enzyme complexes. Inhibits CFI-CFH mediated degradation of Complement C3 beta chain (C3b). In Homo sapiens (Human), this protein is Properdin.